A 592-amino-acid chain; its full sequence is V-type ATP synthase alpha chain (592 aa).

232 to 239 (GPFGAGKT) contacts ATP.

The protein belongs to the ATPase alpha/beta chains family.

It catalyses the reaction ATP + H2O + 4 H(+)(in) = ADP + phosphate + 5 H(+)(out). Its function is as follows. Produces ATP from ADP in the presence of a proton gradient across the membrane. The V-type alpha chain is a catalytic subunit. The chain is V-type ATP synthase alpha chain from Clostridium botulinum (strain Alaska E43 / Type E3).